Consider the following 407-residue polypeptide: Protein-glutamine gamma-glutamyltransferase (407 aa).

Positions 1–31 are cleaved as a signal peptide; the sequence is MRIRRRALVFATMSAVLCTAGFMPSAGEAAA. Positions 32–76 are excised as a propeptide; the sequence is DNGAGEETKSYAETYRLTADDVANINALNESAPAASSAGPSFRAP. A compositionally biased stretch (low complexity) spans 62-72; the sequence is SAPAASSAGPS. Positions 62–98 are disordered; that stretch reads SAPAASSAGPSFRAPDSDDRVTPPAEPLDRMPDPYRP. The span at 76 to 94 shows a compositional bias: basic and acidic residues; it reads PDSDDRVTPPAEPLDRMPD. Residue Cys140 is part of the active site. The tract at residues 282–322 is disordered; sequence QDRSSSADKRKYGDPDAFRPAPGTGLVDMSRDRNIPRSPTS. Residues 286–298 are compositionally biased toward basic and acidic residues; it reads SSADKRKYGDPDA. Active-site residues include Asp331 and His350.

The protein belongs to the bacterial TGase family.

The catalysed reaction is L-glutaminyl-[protein] + L-lysyl-[protein] = [protein]-L-lysyl-N(6)-5-L-glutamyl-[protein] + NH4(+). Catalyzes the cross-linking of proteins and the conjugation of polyamines to proteins. This chain is Protein-glutamine gamma-glutamyltransferase, found in Streptomyces mobaraensis (Streptoverticillium mobaraense).